A 79-amino-acid polypeptide reads, in one-letter code: Translation initiation factor IF-1, chloroplastic (79 aa).

One can recognise an S1-like domain in the interval 1 to 74 (MTRKNIDLIE…HRGRITFRLR (74 aa)).

This sequence belongs to the IF-1 family. As to quaternary structure, component of the 30S ribosomal translation pre-initiation complex which assembles on the 30S ribosome in the order IF-2 and IF-3, IF-1 and N-formylmethionyl-tRNA(fMet); mRNA recruitment can occur at any time during PIC assembly.

It localises to the plastid. It is found in the chloroplast. In terms of biological role, one of the essential components for the initiation of protein synthesis. Stabilizes the binding of IF-2 and IF-3 on the 30S subunit to which N-formylmethionyl-tRNA(fMet) subsequently binds. Helps modulate mRNA selection, yielding the 30S pre-initiation complex (PIC). Upon addition of the 50S ribosomal subunit IF-1, IF-2 and IF-3 are released leaving the mature 70S translation initiation complex. This chain is Translation initiation factor IF-1, chloroplastic, found in Chlorella vulgaris (Green alga).